The sequence spans 28 residues: Cyclotide vodo I2 (28 aa).

3 disulfide bridges follow: C4–C18, C8–C20, and C13–C25.

This is a cyclic peptide. Post-translationally, contains 3 disulfide bonds.

Probably participates in a plant defense mechanism. The polypeptide is Cyclotide vodo I2 (Viola odorata (Sweet violet)).